The chain runs to 225 residues: UPF0758 protein SO_4248 (225 aa).

Positions 102-224 (VLTNPDLTRD…IVSFAERGWI (123 aa)) constitute an MPN domain. The Zn(2+) site is built by H173, H175, and D186. The short motif at 173–186 (HNHPSGIAEPSQAD) is the JAMM motif element.

It belongs to the UPF0758 family.

The sequence is that of UPF0758 protein SO_4248 from Shewanella oneidensis (strain ATCC 700550 / JCM 31522 / CIP 106686 / LMG 19005 / NCIMB 14063 / MR-1).